Reading from the N-terminus, the 263-residue chain is Phosphate import ATP-binding protein PstB (263 aa).

The ABC transporter domain occupies 17-258; that stretch reads ISVKNLDFFY…PKRKETEDYI (242 aa). Position 49-56 (49-56) interacts with ATP; sequence GPSGCGKS.

This sequence belongs to the ABC transporter superfamily. Phosphate importer (TC 3.A.1.7) family. The complex is composed of two ATP-binding proteins (PstB), two transmembrane proteins (PstC and PstA) and a solute-binding protein (PstS).

The protein resides in the cell inner membrane. The catalysed reaction is phosphate(out) + ATP + H2O = ADP + 2 phosphate(in) + H(+). In terms of biological role, part of the ABC transporter complex PstSACB involved in phosphate import. Responsible for energy coupling to the transport system. The sequence is that of Phosphate import ATP-binding protein PstB from Polaromonas sp. (strain JS666 / ATCC BAA-500).